A 237-amino-acid chain; its full sequence is Uridylate kinase (237 aa).

Lysine 12 to glycine 15 serves as a coordination point for ATP. An involved in allosteric activation by GTP region spans residues glycine 20–glycine 25. Position 54 (glycine 54) interacts with UMP. 2 residues coordinate ATP: glycine 55 and arginine 59. UMP-binding positions include aspartate 74 and threonine 135–threonine 142. 3 residues coordinate ATP: threonine 162, tyrosine 168, and aspartate 171.

It belongs to the UMP kinase family. As to quaternary structure, homohexamer.

It is found in the cytoplasm. It carries out the reaction UMP + ATP = UDP + ADP. Its pathway is pyrimidine metabolism; CTP biosynthesis via de novo pathway; UDP from UMP (UMPK route): step 1/1. With respect to regulation, allosterically activated by GTP. Inhibited by UTP. Catalyzes the reversible phosphorylation of UMP to UDP. The chain is Uridylate kinase from Mannheimia succiniciproducens (strain KCTC 0769BP / MBEL55E).